The sequence spans 238 residues: MPVNLSMTPINKAKAWGVHAVTASGVILALLALLALVDNKPQACLLWLGLALLVDGLDGTLARKYEVKEMLPHFDGSVLDLVIDYLTYVFIPAIFIYRYIPLPEHFELLAVGVILVSSLFCFCNVNMKSTDNYFVGFPAAWNVVAVYFYVLDLHPWVNLATVLVLAALTLTRMKFLHPFRVRQFMPLNIAVTFVWLISSGLLIVQQPADLPILLGLWFAASAYFVGICLWRSAREWFG.

The Cytoplasmic segment spans residues 1–16 (MPVNLSMTPINKAKAW). The helical transmembrane segment at 17-37 (GVHAVTASGVILALLALLALV) threads the bilayer. Residues 38-41 (DNKP) are Periplasmic-facing. The chain crosses the membrane as a helical span at residues 42-62 (QACLLWLGLALLVDGLDGTLA). Over 63–75 (RKYEVKEMLPHFD) the chain is Cytoplasmic. The helical transmembrane segment at 76–96 (GSVLDLVIDYLTYVFIPAIFI) threads the bilayer. Topologically, residues 97–104 (YRYIPLPE) are periplasmic. Residues 105 to 125 (HFELLAVGVILVSSLFCFCNV) traverse the membrane as a helical segment. Over 126 to 132 (NMKSTDN) the chain is Cytoplasmic. Residues 133–153 (YFVGFPAAWNVVAVYFYVLDL) form a helical membrane-spanning segment. Residues 154–155 (HP) lie on the Periplasmic side of the membrane. Residues 156-176 (WVNLATVLVLAALTLTRMKFL) traverse the membrane as a helical segment. Residues 177–183 (HPFRVRQ) lie on the Cytoplasmic side of the membrane. Residues 184-204 (FMPLNIAVTFVWLISSGLLIV) traverse the membrane as a helical segment. The Periplasmic portion of the chain corresponds to 205 to 209 (QQPAD). Residues 210 to 230 (LPILLGLWFAASAYFVGICLW) form a helical membrane-spanning segment. The Cytoplasmic segment spans residues 231 to 238 (RSAREWFG).

The protein belongs to the CDP-alcohol phosphatidyltransferase class-I family. Requires Mn(2+) as cofactor.

It localises to the cell inner membrane. The catalysed reaction is a CDP-1,2-diacyl-sn-glycerol + choline = a 1,2-diacyl-sn-glycero-3-phosphocholine + CMP + H(+). Condenses choline with CDP-diglyceride to produce phosphatidylcholine and CMP. This chain is Phosphatidylcholine synthase, found in Pseudomonas aeruginosa (strain ATCC 15692 / DSM 22644 / CIP 104116 / JCM 14847 / LMG 12228 / 1C / PRS 101 / PAO1).